A 249-amino-acid polypeptide reads, in one-letter code: Eukaryotic translation initiation factor 3 subunit K (249 aa).

In terms of domain architecture, PCI spans 46 to 222; sequence FDCYANLALL…VKVPTNKENE (177 aa).

This sequence belongs to the eIF-3 subunit K family. As to quaternary structure, component of the eukaryotic translation initiation factor 3 (eIF-3) complex.

The protein resides in the cytoplasm. Functionally, component of the eukaryotic translation initiation factor 3 (eIF-3) complex, which is involved in protein synthesis of a specialized repertoire of mRNAs and, together with other initiation factors, stimulates binding of mRNA and methionyl-tRNAi to the 40S ribosome. The eIF-3 complex specifically targets and initiates translation of a subset of mRNAs involved in cell proliferation. This is Eukaryotic translation initiation factor 3 subunit K from Neosartorya fischeri (strain ATCC 1020 / DSM 3700 / CBS 544.65 / FGSC A1164 / JCM 1740 / NRRL 181 / WB 181) (Aspergillus fischerianus).